A 188-amino-acid chain; its full sequence is UPF0340 protein GK3370 (188 aa).

Belongs to the UPF0340 family.

The sequence is that of UPF0340 protein GK3370 from Geobacillus kaustophilus (strain HTA426).